The chain runs to 225 residues: MSIKQWPEGERPREKLLERGAAALSDAELLAILLRVGTRGMSAVDLARYLLQEFGSLGRLMSAEVGKLSAYKGMGTASFTQFAVVREIGRRILEEELQEEITLSDPDTVADYLRFHLGQEKVEVSVALLLNRQNQLIAVRELSRGTVAENTIYIREIVKLALDEYADSLIIAHNHPGGSPEPSQEDIMFTRRLAQAMSLVDVSLLDHFIVTSQTVRSFRQLGLMP.

Positions 102 to 224 (TLSDPDTVAD…VRSFRQLGLM (123 aa)) constitute an MPN domain. Zn(2+) contacts are provided by H173, H175, and D186. Residues 173–186 (HNHPGGSPEPSQED) carry the JAMM motif motif.

This sequence belongs to the UPF0758 family.

The protein is UPF0758 protein NGK_1225 of Neisseria gonorrhoeae (strain NCCP11945).